The following is a 157-amino-acid chain: Arginine repressor (157 aa).

Belongs to the ArgR family.

Its subcellular location is the cytoplasm. The protein operates within amino-acid biosynthesis; L-arginine biosynthesis [regulation]. Functionally, regulates arginine biosynthesis genes. In Bacteroides fragilis (strain ATCC 25285 / DSM 2151 / CCUG 4856 / JCM 11019 / LMG 10263 / NCTC 9343 / Onslow / VPI 2553 / EN-2), this protein is Arginine repressor.